The sequence spans 194 residues: Peptidyl-tRNA hydrolase (194 aa).

Tyrosine 17 contacts tRNA. Histidine 22 acts as the Proton acceptor in catalysis. TRNA-binding residues include phenylalanine 68, asparagine 70, and asparagine 116.

It belongs to the PTH family. Monomer.

Its subcellular location is the cytoplasm. The catalysed reaction is an N-acyl-L-alpha-aminoacyl-tRNA + H2O = an N-acyl-L-amino acid + a tRNA + H(+). Functionally, hydrolyzes ribosome-free peptidyl-tRNAs (with 1 or more amino acids incorporated), which drop off the ribosome during protein synthesis, or as a result of ribosome stalling. Its function is as follows. Catalyzes the release of premature peptidyl moieties from peptidyl-tRNA molecules trapped in stalled 50S ribosomal subunits, and thus maintains levels of free tRNAs and 50S ribosomes. This is Peptidyl-tRNA hydrolase from Proteus mirabilis (strain HI4320).